The primary structure comprises 262 residues: MAPALLLVPAALASFILAFGTGVEFVRFTSLRPLLGGIPESGGPDARQGWLAALQDQSILVPLAWDLGLLLLFVGQHSLMATETVKAWMSRYFGVLQRSLYVACTALALQLVMRYWEPVPRGPVLWEAQAEPWATWVPLLCFVLHVISWLLIFSILLVFDYAELMGLKQVYYHVLGLGEPLALKSPRALRLFSHLRHPVCVELLTVLWVVPTLGTDRLLLALLLTLYLGLAHGLDQQDLRYLRAQLQRKLHLLSRPQDGEAE.

The Nuclear portion of the chain corresponds to 1–4; sequence MAPA. Residues 5–28 form a helical membrane-spanning segment; that stretch reads LLLVPAALASFILAFGTGVEFVRF. Over 29 to 58 the chain is Perinuclear space; that stretch reads TSLRPLLGGIPESGGPDARQGWLAALQDQS. Residues 59 to 80 form a helical membrane-spanning segment; the sequence is ILVPLAWDLGLLLLFVGQHSLM. Over 81 to 97 the chain is Nuclear; that stretch reads ATETVKAWMSRYFGVLQ. Residues 98 to 114 traverse the membrane as a helical segment; the sequence is RSLYVACTALALQLVMR. At 115-133 the chain is on the perinuclear space side; it reads YWEPVPRGPVLWEAQAEPW. Residues 134-164 traverse the membrane as a helical segment; it reads ATWVPLLCFVLHVISWLLIFSILLVFDYAEL. At 165–191 the chain is on the nuclear side; it reads MGLKQVYYHVLGLGEPLALKSPRALRL. The chain crosses the membrane as a helical span at residues 192-210; sequence FSHLRHPVCVELLTVLWVV. The Perinuclear space portion of the chain corresponds to 211 to 216; it reads PTLGTD. Residues 217–234 traverse the membrane as a helical segment; that stretch reads RLLLALLLTLYLGLAHGL. Over 235-262 the chain is Nuclear; sequence DQQDLRYLRAQLQRKLHLLSRPQDGEAE.

Belongs to the nurim family.

It localises to the nucleus inner membrane. This chain is Nurim (NRM), found in Sus scrofa (Pig).